The sequence spans 427 residues: Inward rectifier potassium channel 2 (427 aa).

Residues 1–81 (MGSVRTNRYS…IFTTCVDIRW (81 aa)) are Cytoplasmic-facing. Residue cysteine 76 is modified to S-nitrosocysteine. Residues 82-106 (RWMLVIFCLAFVLSWLFFGCVFWLI) traverse the membrane as a helical segment. The Extracellular portion of the chain corresponds to 107–128 (ALLHGDLDASKEGKACVSEVNS). The segment at residues 129–140 (FTAAFLFSIETQ) is an intramembrane region (helical; Pore-forming). The pore-forming intramembrane region spans 141 to 147 (TTIGYGF). A Selectivity filter motif is present at residues 142–147 (TIGYGF). At 148–156 (RCVTDECPI) the chain is on the extracellular side. A helical membrane pass occupies residues 157–178 (AVFMVVFQSIVGCIIDAFIIGA). The Cytoplasmic segment spans residues 179–427 (VMAKMAKPKK…PRPLRRESEI (249 aa)). The segment at 181–208 (AKMAKPKKRNETLVFSHNAVIAMRDGKL) is polyphosphoinositide (PIP2)-binding. The interval 384-427 (SKEEDDSENGVPESTSTDTPPDIDLHNQASVPLEPRPLRRESEI) is disordered. Positions 425–427 (SEI) match the PDZ-binding motif.

This sequence belongs to the inward rectifier-type potassium channel (TC 1.A.2.1) family. KCNJ2 subfamily. As to quaternary structure, homotetramer. Homomultimeric and heteromultimeric association with KCNJ4/Kir2.3. Can form heteromeric channels with Kir2.6/KCNJ18. Associates, via its PDZ-recognition domain, with a complex containing LIN7A, LIN7B, LIN7C, DLG1, CASK and APBA1. In terms of processing, S-nitrosylation increases the open probability and inward rectifying currents.

It localises to the cell membrane. It is found in the sarcolemma. The protein localises to the T-tubule. The enzyme catalyses K(+)(in) = K(+)(out). Activated by phosphatidylinositol 4,5 biphosphate (PtdIns(4,5)P2). Its function is as follows. Inward rectifier potassium channels are characterized by a greater tendency to allow potassium to flow into the cell rather than out of it. Their voltage dependence is regulated by the concentration of extracellular potassium; as external potassium is raised, the voltage range of the channel opening shifts to more positive voltages. The inward rectification is mainly due to the blockage of outward current by internal magnesium. Can be blocked by extracellular barium or cesium. Probably participates in establishing action potential waveform and excitability of neuronal and muscle tissues. This is Inward rectifier potassium channel 2 (KCNJ2) from Macaca mulatta (Rhesus macaque).